An 88-amino-acid polypeptide reads, in one-letter code: MAFAQSGGAGGGGGQRRPFFRRRKTCPFSGPNAPKIDYKDVRLLQRYISERGKIVPSRITAVSAKKQRELSAAIKRSRFLGLLPFVIR.

The disordered stretch occupies residues 1–26 (MAFAQSGGAGGGGGQRRPFFRRRKTC).

This sequence belongs to the bacterial ribosomal protein bS18 family. Part of the 30S ribosomal subunit. Forms a tight heterodimer with protein bS6.

In terms of biological role, binds as a heterodimer with protein bS6 to the central domain of the 16S rRNA, where it helps stabilize the platform of the 30S subunit. This Xanthobacter autotrophicus (strain ATCC BAA-1158 / Py2) protein is Small ribosomal subunit protein bS18.